The following is a 382-amino-acid chain: Na(+)/H(+) antiporter NhaA 2 (382 aa).

11 consecutive transmembrane segments (helical) span residues 7 to 27, 58 to 78, 94 to 114, 124 to 144, 153 to 173, 178 to 198, 199 to 219, 255 to 275, 291 to 311, 327 to 347, and 361 to 381; these read MALSETFPGILLIFFTFLALL, LDLWINDGLIAIFFLCIGLEL, SLPIFGALGGMITPALIFAAI, GWAIPTATDIAFAVGILMLLG, LFLLSLAIFDDLGAIVIIALF, LSALAIIICLFCIFALLLLNY, YHITHLSLYVLVGVVLWIAML, NPWVVYFILPLFAFANAGIDI, IILGLFLGKQLGVFIFCFIAI, FYGICILTGIGFTMSLFIDGL, and LAILIASFLSAIVGFIYLKIV.

This sequence belongs to the NhaA Na(+)/H(+) (TC 2.A.33) antiporter family.

It localises to the cell inner membrane. It carries out the reaction Na(+)(in) + 2 H(+)(out) = Na(+)(out) + 2 H(+)(in). Its function is as follows. Na(+)/H(+) antiporter that extrudes sodium in exchange for external protons. This Campylobacter jejuni subsp. doylei (strain ATCC BAA-1458 / RM4099 / 269.97) protein is Na(+)/H(+) antiporter NhaA 2.